Here is a 456-residue protein sequence, read N- to C-terminus: Bestrophin homolog 18 (456 aa).

Helical transmembrane passes span 29–49 (WSAI…VSAI), 83–103 (GFFI…IGFI), 234–254 (IIYP…GILA), and 267–287 (MIDL…MGWL). The segment at 416–456 (ASSSRSLERQRSPGSFRMETLTPGSPTNTPIEPIDKIDKKK) is disordered.

Belongs to the anion channel-forming bestrophin (TC 1.A.46) family. Calcium-sensitive chloride channel subfamily. As to quaternary structure, forms oligomers.

It localises to the cell membrane. In terms of biological role, forms chloride channels. In Caenorhabditis elegans, this protein is Bestrophin homolog 18 (best-18).